A 451-amino-acid chain; its full sequence is Proline--tRNA ligase (451 aa).

Belongs to the class-II aminoacyl-tRNA synthetase family. ProS type 2 subfamily. Homodimer.

It is found in the cytoplasm. It carries out the reaction tRNA(Pro) + L-proline + ATP = L-prolyl-tRNA(Pro) + AMP + diphosphate. Its function is as follows. Catalyzes the attachment of proline to tRNA(Pro) in a two-step reaction: proline is first activated by ATP to form Pro-AMP and then transferred to the acceptor end of tRNA(Pro). The sequence is that of Proline--tRNA ligase from Roseobacter denitrificans (strain ATCC 33942 / OCh 114) (Erythrobacter sp. (strain OCh 114)).